The primary structure comprises 331 residues: MTDILAVAREQVLVRGEGLDQDQTLQVLQLPDDRLDDLLALAHEVRMAWCGPDVEVEGIISLKTGGCPEDCHFCSQSGLFASPVRSAWLDIPSLVEAAKQTAKTGATEFCIVAAVRGPDERLLAQVAAGIEAIRNEVDIQIACSLGMLTQDQVERLSEMGVHRYNHNLETARSFFTNVVTTHSWEERWDTLQMVREAGMEVCCGGILGMGETLEQRAEFAANLAELDPHEVPLNFLNPRPGTPFGDLEVLPASEALKAVAAFRLALPRTMLRFAGGREITLGDLGAKQGILGGINAVIVGNYLTTLGRPAEADLQLLDDLQMPIKALNATL.

The Radical SAM core domain occupies 52 to 277; it reads PDVEVEGIIS…RTMLRFAGGR (226 aa). The [4Fe-4S] cluster site is built by Cys67, Cys71, and Cys74. [2Fe-2S] cluster-binding residues include Cys110, Cys143, Cys202, and Arg272.

This sequence belongs to the radical SAM superfamily. Biotin synthase family. Homodimer. [4Fe-4S] cluster serves as cofactor. The cofactor is [2Fe-2S] cluster.

The enzyme catalyses (4R,5S)-dethiobiotin + (sulfur carrier)-SH + 2 reduced [2Fe-2S]-[ferredoxin] + 2 S-adenosyl-L-methionine = (sulfur carrier)-H + biotin + 2 5'-deoxyadenosine + 2 L-methionine + 2 oxidized [2Fe-2S]-[ferredoxin]. The protein operates within cofactor biosynthesis; biotin biosynthesis; biotin from 7,8-diaminononanoate: step 2/2. Catalyzes the conversion of dethiobiotin (DTB) to biotin by the insertion of a sulfur atom into dethiobiotin via a radical-based mechanism. This chain is Biotin synthase, found in Mycolicibacterium vanbaalenii (strain DSM 7251 / JCM 13017 / BCRC 16820 / KCTC 9966 / NRRL B-24157 / PYR-1) (Mycobacterium vanbaalenii).